The chain runs to 1377 residues: Clustered mitochondria protein homolog (1377 aa).

A disordered region spans residues 1 to 61; it reads MLKSIQRNGK…GETKKKSDSE (61 aa). Positions 353–595 constitute a Clu domain; sequence RAEDTFSSKL…RTFPPDVNFL (243 aa). The TPR 1 repeat unit spans residues 519 to 552; sequence VYGSIDFGKTVLSHEKYLELLNNAGKHLKIYPHS. Disordered regions lie at residues 651 to 700 and 886 to 917; these read NKRQ…VPKV and DVLT…KSSF. Residues 655–690 are compositionally biased toward basic and acidic residues; sequence QKQDTPKEETKAIEPAAKEDSANNNKEEPAAKKGEP. Positions 886 to 896 are enriched in polar residues; the sequence is DVLTKSGSSGK. 3 TPR repeats span residues 1022–1055, 1148–1181, and 1183–1216; these read AYNF…LNNV, ALLD…NIKY, and GEKS…EKET. The interval 1310–1377 is disordered; that stretch reads KEGGAAGESS…SKANPVASSS (68 aa). A compositionally biased stretch (low complexity) spans 1364-1377; sequence ASSSSKANPVASSS.

It belongs to the CLU family.

The protein resides in the cytoplasm. Its function is as follows. mRNA-binding protein involved in proper cytoplasmic distribution of mitochondria. This is Clustered mitochondria protein homolog from Culex quinquefasciatus (Southern house mosquito).